Here is a 242-residue protein sequence, read N- to C-terminus: Type III pantothenate kinase (242 aa).

Position 7–14 (7–14 (DLGNSRFK)) interacts with ATP. Substrate contacts are provided by residues Tyr-91 and 98 to 101 (GVDR). The Proton acceptor role is filled by Asp-100. Thr-121 lines the ATP pocket. Thr-171 provides a ligand contact to substrate.

It belongs to the type III pantothenate kinase family. As to quaternary structure, homodimer. Requires NH4(+) as cofactor. K(+) is required as a cofactor.

Its subcellular location is the cytoplasm. It carries out the reaction (R)-pantothenate + ATP = (R)-4'-phosphopantothenate + ADP + H(+). The protein operates within cofactor biosynthesis; coenzyme A biosynthesis; CoA from (R)-pantothenate: step 1/5. Functionally, catalyzes the phosphorylation of pantothenate (Pan), the first step in CoA biosynthesis. The chain is Type III pantothenate kinase from Xanthomonas euvesicatoria pv. vesicatoria (strain 85-10) (Xanthomonas campestris pv. vesicatoria).